A 303-amino-acid chain; its full sequence is Glutathione transport system permease protein GsiD (303 aa).

6 consecutive transmembrane segments (helical) span residues 40–60 (AMTA…ARWI), 105–125 (LAAG…LGLL), 144–164 (LFAF…GSGI), 165–185 (ANVI…LVRG), 222–242 (IVVF…SLSF), and 266–286 (VIAP…VLAF). One can recognise an ABC transmembrane type-1 domain in the interval 101 to 290 (AQISLAAGVF…LTVLAFNLLG (190 aa)).

The protein belongs to the binding-protein-dependent transport system permease family. In terms of assembly, the complex is composed of two ATP-binding proteins (GsiA), two transmembrane proteins (GsiC and GsiD) and a solute-binding protein (GsiB).

It is found in the cell inner membrane. Functionally, part of the ABC transporter complex GsiABCD involved in glutathione import. Probably responsible for the translocation of the substrate across the membrane. This chain is Glutathione transport system permease protein GsiD, found in Escherichia coli O6:K15:H31 (strain 536 / UPEC).